The sequence spans 329 residues: HTH-type transcriptional regulator ArgR (329 aa).

The 99-residue stretch at 214-312 (TQAVLLMEAN…GVTPREDRNQ (99 aa)) folds into the HTH araC/xylS-type domain. DNA-binding regions (H-T-H motif) lie at residues 231–252 (DEIA…KQYL) and 279–302 (IIQI…RNFF). The disordered stretch occupies residues 307–329 (REDRNQRRGGSAFETTFTPVERG). Positions 319-329 (FETTFTPVERG) are enriched in polar residues.

ArgR could be a transcriptional activator of the dauBAR operon in response to the presence of L-Arg. The chain is HTH-type transcriptional regulator ArgR (argR) from Pseudomonas aeruginosa (strain ATCC 15692 / DSM 22644 / CIP 104116 / JCM 14847 / LMG 12228 / 1C / PRS 101 / PAO1).